The chain runs to 279 residues: Ribosomal RNA small subunit methyltransferase A (279 aa).

S-adenosyl-L-methionine is bound by residues His12, Leu14, Gly39, Glu60, Asp81, and Asn118.

Belongs to the class I-like SAM-binding methyltransferase superfamily. rRNA adenine N(6)-methyltransferase family. RsmA subfamily.

It is found in the cytoplasm. It carries out the reaction adenosine(1518)/adenosine(1519) in 16S rRNA + 4 S-adenosyl-L-methionine = N(6)-dimethyladenosine(1518)/N(6)-dimethyladenosine(1519) in 16S rRNA + 4 S-adenosyl-L-homocysteine + 4 H(+). In terms of biological role, specifically dimethylates two adjacent adenosines (A1518 and A1519) in the loop of a conserved hairpin near the 3'-end of 16S rRNA in the 30S particle. May play a critical role in biogenesis of 30S subunits. This Polaromonas naphthalenivorans (strain CJ2) protein is Ribosomal RNA small subunit methyltransferase A.